We begin with the raw amino-acid sequence, 59 residues long: Large ribosomal subunit protein bL32 (59 aa).

The segment at 1 to 59 (MAVQQNKKSPSKRGMHRSHDFLTTSPLAVEPSTGEVHLRHHISPNGYYRGKKVVKTKND) is disordered. A compositionally biased stretch (basic residues) spans 49–59 (RGKKVVKTKND).

It belongs to the bacterial ribosomal protein bL32 family.

In Burkholderia mallei (strain NCTC 10247), this protein is Large ribosomal subunit protein bL32.